Here is a 333-residue protein sequence, read N- to C-terminus: UDP-glucose 4-epimerase (333 aa).

Residues 11-12 (YI), 32-37 (DSLVTG), 52-53 (DL), 75-79 (FAAYS), asparagine 94, threonine 119, tyrosine 143, lysine 147, and phenylalanine 171 contribute to the NAD(+) site. Substrate-binding residues include threonine 119 and tyrosine 143. Tyrosine 143 serves as the catalytic Proton acceptor. Substrate is bound by residues asparagine 172, 191-192 (HL), 208-210 (MIF), arginine 223, and 284-287 (RSGD).

This sequence belongs to the NAD(P)-dependent epimerase/dehydratase family. In terms of assembly, homodimer. It depends on NAD(+) as a cofactor.

The enzyme catalyses UDP-alpha-D-glucose = UDP-alpha-D-galactose. It participates in carbohydrate metabolism; galactose metabolism. In terms of biological role, involved in the metabolism of galactose. Catalyzes the conversion of UDP-galactose (UDP-Gal) to UDP-glucose (UDP-Glc) through a mechanism involving the transient reduction of NAD. The protein is UDP-glucose 4-epimerase (galE) of Streptococcus mutans serotype c (strain ATCC 700610 / UA159).